Consider the following 141-residue polypeptide: MNYATVNDLCARYTRTRLDILTRPKTADGQPDDAVAEQALADASAFIDGYLAARFVLPLTVVPSLLKRQCCVVAWFYLNESQPTEQITATYRDTVRWLEQVRDGKTDPGVESRTAASPEGEDLVQVQSDPPVFSRKQKGFI.

The disordered stretch occupies residues 102–141; that stretch reads RDGKTDPGVESRTAASPEGEDLVQVQSDPPVFSRKQKGFI.

The protein localises to the host cytoplasm. The sequence is that of Gene product J (J) from Enterobacteriaceae (Bacteriophage Mu).